A 124-amino-acid polypeptide reads, in one-letter code: uncharacterized protein (124 aa).

The protein localises to the plastid. Its subcellular location is the chloroplast. This is an uncharacterized protein from Chlamydomonas reinhardtii (Chlamydomonas smithii).